A 510-amino-acid polypeptide reads, in one-letter code: ATP synthase subunit alpha (510 aa).

Position 169–176 (169–176 (GDRQTGKT)) interacts with ATP.

Belongs to the ATPase alpha/beta chains family. As to quaternary structure, F-type ATPases have 2 components, CF(1) - the catalytic core - and CF(0) - the membrane proton channel. CF(1) has five subunits: alpha(3), beta(3), gamma(1), delta(1), epsilon(1). CF(0) has three main subunits: a(1), b(2) and c(9-12). The alpha and beta chains form an alternating ring which encloses part of the gamma chain. CF(1) is attached to CF(0) by a central stalk formed by the gamma and epsilon chains, while a peripheral stalk is formed by the delta and b chains.

Its subcellular location is the cell inner membrane. It catalyses the reaction ATP + H2O + 4 H(+)(in) = ADP + phosphate + 5 H(+)(out). Its function is as follows. Produces ATP from ADP in the presence of a proton gradient across the membrane. The alpha chain is a regulatory subunit. This Rickettsia conorii (strain ATCC VR-613 / Malish 7) protein is ATP synthase subunit alpha.